A 526-amino-acid chain; its full sequence is Exodeoxyribonuclease 7 large subunit (526 aa).

A disordered region spans residues 497-526 (AMTTEGGTPPGGAKKRSTKPAEPTKQGSLF).

It belongs to the XseA family. As to quaternary structure, heterooligomer composed of large and small subunits.

The protein resides in the cytoplasm. It carries out the reaction Exonucleolytic cleavage in either 5'- to 3'- or 3'- to 5'-direction to yield nucleoside 5'-phosphates.. Its function is as follows. Bidirectionally degrades single-stranded DNA into large acid-insoluble oligonucleotides, which are then degraded further into small acid-soluble oligonucleotides. The polypeptide is Exodeoxyribonuclease 7 large subunit (Rhizobium etli (strain ATCC 51251 / DSM 11541 / JCM 21823 / NBRC 15573 / CFN 42)).